A 466-amino-acid polypeptide reads, in one-letter code: Ribosome biogenesis protein YTM1 (466 aa).

Residues 8–95 (IKINFFTNEE…EASLNLEYTR (88 aa)) are ubiquitin-like (UBL) domain. The segment at 105–466 (SFNNDDWISS…QINKGSDITK (362 aa)) is sufficient for interaction with ERB1 and association with 66S pre-ribosomes. 7 WD repeats span residues 120-159 (PLSA…EKQY), 161-199 (GHSG…NIED), 214-253 (GHKA…MTTI), 291-331 (GHSQ…CVDT), 333-372 (TTGY…TTTE), 381-421 (GHTN…SLYT), and 431-466 (KGQD…DITK).

This sequence belongs to the WD repeat WDR12/YTM1 family. Component of the NOP7 complex, composed of ERB1, NOP7 and YTM1. The complex is held together by ERB1, which interacts with NOP7 via its N-terminal domain and with YTM1 via a high-affinity interaction between the seven-bladed beta-propeller domains of the 2 proteins. The NOP7 complex associates with the 66S pre-ribosome. Interacts (via UBL domain) with MDN1 (via VWFA/MIDAS domain).

The protein localises to the nucleus. The protein resides in the nucleolus. It is found in the nucleoplasm. Component of the NOP7 complex, which is required for maturation of the 25S and 5.8S ribosomal RNAs and formation of the 60S ribosome. The protein is Ribosome biogenesis protein YTM1 of Debaryomyces hansenii (strain ATCC 36239 / CBS 767 / BCRC 21394 / JCM 1990 / NBRC 0083 / IGC 2968) (Yeast).